We begin with the raw amino-acid sequence, 724 residues long: Outer spore wall protein 2 (724 aa).

2 disordered regions span residues 407-427 (NSGQ…KNRV) and 477-497 (TSGG…YDDK).

It localises to the cytoplasm. The protein localises to the prospore membrane. Functionally, may be involved in a late step of spore wall assembly. This is Outer spore wall protein 2 (OSW2) from Saccharomyces cerevisiae (strain ATCC 204508 / S288c) (Baker's yeast).